We begin with the raw amino-acid sequence, 269 residues long: 2-dehydro-3-deoxyphosphooctonate aldolase (269 aa).

It belongs to the KdsA family.

The protein localises to the cytoplasm. The enzyme catalyses D-arabinose 5-phosphate + phosphoenolpyruvate + H2O = 3-deoxy-alpha-D-manno-2-octulosonate-8-phosphate + phosphate. Its pathway is carbohydrate biosynthesis; 3-deoxy-D-manno-octulosonate biosynthesis; 3-deoxy-D-manno-octulosonate from D-ribulose 5-phosphate: step 2/3. It functions in the pathway bacterial outer membrane biogenesis; lipopolysaccharide biosynthesis. This Chlamydia trachomatis serovar A (strain ATCC VR-571B / DSM 19440 / HAR-13) protein is 2-dehydro-3-deoxyphosphooctonate aldolase.